The chain runs to 113 residues: Histone H2B (113 aa).

Residues Met-1–Lys-21 form a disordered region. Residues Lys-7 to Lys-21 are compositionally biased toward basic residues. A Glycyl lysine isopeptide (Lys-Gly) (interchain with G-Cter in ubiquitin) cross-link involves residue Lys-109.

It belongs to the histone H2B family. In terms of assembly, the nucleosome is a histone octamer containing two molecules each of H2A, H2B, H3 and H4 assembled in one H3-H4 heterotetramer and two H2A-H2B heterodimers. The octamer wraps approximately 147 bp of DNA. Post-translationally, monoubiquitination of Lys-109 gives a specific tag for epigenetic transcriptional activation and is also prerequisite for histone H3 'Lys-4' and 'Lys-79' methylation.

It is found in the nucleus. The protein resides in the chromosome. In terms of biological role, core component of nucleosome. Nucleosomes wrap and compact DNA into chromatin, limiting DNA accessibility to the cellular machineries which require DNA as a template. Histones thereby play a central role in transcription regulation, DNA repair, DNA replication and chromosomal stability. DNA accessibility is regulated via a complex set of post-translational modifications of histones, also called histone code, and nucleosome remodeling. The sequence is that of Histone H2B (H2B1) from Euplotes crassus.